The primary structure comprises 196 residues: Pyridoxine/pyridoxamine 5'-phosphate oxidase (196 aa).

Residues 44–49 (RTVLLK), 59–60 (YT), R65, K66, and Q88 contribute to the FMN site. A substrate-binding site is contributed by K49. The substrate site is built by Y106, R110, and S114. Residues 123–124 (QS) and W169 each bind FMN. 175–177 (RLH) is a binding site for substrate. R179 provides a ligand contact to FMN.

It belongs to the pyridoxamine 5'-phosphate oxidase family. In terms of assembly, homodimer. Requires FMN as cofactor.

The catalysed reaction is pyridoxamine 5'-phosphate + O2 + H2O = pyridoxal 5'-phosphate + H2O2 + NH4(+). The enzyme catalyses pyridoxine 5'-phosphate + O2 = pyridoxal 5'-phosphate + H2O2. It participates in cofactor metabolism; pyridoxal 5'-phosphate salvage; pyridoxal 5'-phosphate from pyridoxamine 5'-phosphate: step 1/1. The protein operates within cofactor metabolism; pyridoxal 5'-phosphate salvage; pyridoxal 5'-phosphate from pyridoxine 5'-phosphate: step 1/1. Its function is as follows. Catalyzes the oxidation of either pyridoxine 5'-phosphate (PNP) or pyridoxamine 5'-phosphate (PMP) into pyridoxal 5'-phosphate (PLP). The sequence is that of Pyridoxine/pyridoxamine 5'-phosphate oxidase from Alkalilimnicola ehrlichii (strain ATCC BAA-1101 / DSM 17681 / MLHE-1).